We begin with the raw amino-acid sequence, 247 residues long: Carboxy-S-adenosyl-L-methionine synthase (247 aa).

S-adenosyl-L-methionine-binding positions include Y38, 63 to 65 (GCS), N131, and R198.

It belongs to the class I-like SAM-binding methyltransferase superfamily. Cx-SAM synthase family. In terms of assembly, homodimer.

The enzyme catalyses prephenate + S-adenosyl-L-methionine = carboxy-S-adenosyl-L-methionine + 3-phenylpyruvate + H2O. Its function is as follows. Catalyzes the conversion of S-adenosyl-L-methionine (SAM) to carboxy-S-adenosyl-L-methionine (Cx-SAM). This chain is Carboxy-S-adenosyl-L-methionine synthase, found in Desulforapulum autotrophicum (strain ATCC 43914 / DSM 3382 / VKM B-1955 / HRM2) (Desulfobacterium autotrophicum).